We begin with the raw amino-acid sequence, 542 residues long: Carbamoyl phosphate synthase large chain, C-terminal section (542 aa).

The tract at residues 1 to 389 is carbamoyl phosphate synthetic domain; that stretch reads MSDKVLVIGA…WKAQLAAGHE (389 aa). Positions 122 to 316 constitute an ATP-grasp domain; the sequence is SKLLKKLGIP…LAKIGTKAIL (195 aa). The ATP site is built by Arg-158, Arg-197, Ile-199, Glu-204, Gly-230, Val-231, His-232, Ser-233, Gln-273, and Glu-287. Gln-273, Glu-287, and Asn-289 together coordinate Mg(2+). Mn(2+) is bound by residues Gln-273, Glu-287, and Asn-289. Residues 388–542 form the MGS-like domain; sequence HELPLEGTAV…KPEELTRYGG (155 aa). Residues 390 to 542 form an allosteric domain region; sequence LPLEGTAVIS…KPEELTRYGG (153 aa).

The protein belongs to the CarB family. As to quaternary structure, composed of two chains; the small (or glutamine) chain promotes the hydrolysis of glutamine to ammonia, which is used by the large (or ammonia) chain to synthesize carbamoyl phosphate. Tetramer of heterodimers (alpha,beta)4. Mg(2+) serves as cofactor. The cofactor is Mn(2+).

The catalysed reaction is hydrogencarbonate + L-glutamine + 2 ATP + H2O = carbamoyl phosphate + L-glutamate + 2 ADP + phosphate + 2 H(+). It catalyses the reaction hydrogencarbonate + NH4(+) + 2 ATP = carbamoyl phosphate + 2 ADP + phosphate + 2 H(+). The protein operates within amino-acid biosynthesis; L-arginine biosynthesis; carbamoyl phosphate from bicarbonate: step 1/1. It functions in the pathway pyrimidine metabolism; UMP biosynthesis via de novo pathway; (S)-dihydroorotate from bicarbonate: step 1/3. Its function is as follows. Large subunit of the glutamine-dependent carbamoyl phosphate synthetase (CPSase). CPSase catalyzes the formation of carbamoyl phosphate from the ammonia moiety of glutamine, carbonate, and phosphate donated by ATP, constituting the first step of 2 biosynthetic pathways, one leading to arginine and/or urea and the other to pyrimidine nucleotides. The large subunit (synthetase) binds the substrates ammonia (free or transferred from glutamine from the small subunit), hydrogencarbonate and ATP and carries out an ATP-coupled ligase reaction, activating hydrogencarbonate by forming carboxy phosphate which reacts with ammonia to form carbamoyl phosphate. The protein is Carbamoyl phosphate synthase large chain, C-terminal section (carB2) of Methanopyrus kandleri (strain AV19 / DSM 6324 / JCM 9639 / NBRC 100938).